We begin with the raw amino-acid sequence, 593 residues long: Aspartate--tRNA(Asp/Asn) ligase (593 aa).

Residue E173 coordinates L-aspartate. The aspartate stretch occupies residues 197–200 (QLFK). Position 219 (R219) interacts with L-aspartate. ATP-binding positions include 219 to 221 (RDE) and Q228. An L-aspartate-binding site is contributed by H451. E485 is an ATP binding site. R492 serves as a coordination point for L-aspartate. 537–540 (GIDR) is a binding site for ATP.

The protein belongs to the class-II aminoacyl-tRNA synthetase family. Type 1 subfamily. In terms of assembly, homodimer.

The protein localises to the cytoplasm. It catalyses the reaction tRNA(Asx) + L-aspartate + ATP = L-aspartyl-tRNA(Asx) + AMP + diphosphate. Aspartyl-tRNA synthetase with relaxed tRNA specificity since it is able to aspartylate not only its cognate tRNA(Asp) but also tRNA(Asn). Reaction proceeds in two steps: L-aspartate is first activated by ATP to form Asp-AMP and then transferred to the acceptor end of tRNA(Asp/Asn). The polypeptide is Aspartate--tRNA(Asp/Asn) ligase (Legionella pneumophila subsp. pneumophila (strain Philadelphia 1 / ATCC 33152 / DSM 7513)).